A 107-amino-acid chain; its full sequence is Neuroparsin-A (107 aa).

Positions 1–22 are cleaved as a signal peptide; the sequence is MKATAALVAATLLLAVTLFHRA. Residues 23-24 constitute a propeptide that is removed on maturation; sequence ER.

Homodimer; disulfide-linked.

In terms of biological role, neurosparins are multifunctional neurohormones: they inhibit the effects of juvenile hormone, stimulate fluid reabsorption of isolated recta and induces an increase in hemolymph lipid and trehalose levels. This Locusta migratoria (Migratory locust) protein is Neuroparsin-A.